Here is a 681-residue protein sequence, read N- to C-terminus: Peroxisomal acyl-coenzyme A oxidase 2 (681 aa).

A phosphoserine mark is found at Ser-3 and Ser-9. Lys-66, Lys-137, Lys-303, Lys-453, Lys-561, and Lys-667 each carry N6-succinyllysine. The Microbody targeting signal motif lies at His-679 to Met-681.

Belongs to the acyl-CoA oxidase family. In terms of assembly, homodimer. FAD is required as a cofactor. Most abundant in liver. Also expressed in kidney. Not present in any other tissues tested.

It is found in the peroxisome. The enzyme catalyses (25R)-3alpha,7alpha,12alpha-trihydroxy-5beta-cholestan-26-oyl-CoA + A + H2O = (24R,25R)-3alpha,7alpha,12alpha,24-tetrahydroxy-5beta-cholestan-26-oyl-CoA + AH2. The catalysed reaction is (25S)-3alpha,7alpha,12alpha-trihydroxy-5beta-cholestan-26-oyl-CoA + O2 = (24E)-3alpha,7alpha,12alpha-trihydroxy-5beta-cholest-24-en-26-oyl-CoA + H2O2. In terms of biological role, oxidizes the CoA esters of the bile acid intermediates di- and tri-hydroxycoprostanic acids. Capable of oxidizing short as well as long chain 2-methyl branched fatty acids. The chain is Peroxisomal acyl-coenzyme A oxidase 2 from Rattus norvegicus (Rat).